Reading from the N-terminus, the 150-residue chain is Large ribosomal subunit protein uL13 (150 aa).

The tract at residues 129 to 150 (AEHPHAAQQPKPLQLDPAATAQ) is disordered.

It belongs to the universal ribosomal protein uL13 family. As to quaternary structure, part of the 50S ribosomal subunit.

This protein is one of the early assembly proteins of the 50S ribosomal subunit, although it is not seen to bind rRNA by itself. It is important during the early stages of 50S assembly. This chain is Large ribosomal subunit protein uL13, found in Synechococcus sp. (strain WH7803).